A 243-amino-acid chain; its full sequence is Terpene cyclase nodB (243 aa).

3 helical membrane passes run 19 to 39 (ISDI…AGMI), 50 to 70 (MAPL…LIYP), and 75 to 95 (IEQG…YTAI). An N-linked (GlcNAc...) asparagine glycan is attached at Asn111. The next 4 membrane-spanning stretches (helical) occupy residues 112–132 (ITLI…ALAA), 134–154 (IGPA…LSVG), 169–189 (SYTL…FAIL), and 205–225 (LVLW…ICLW).

Belongs to the paxB family.

The protein resides in the membrane. It participates in secondary metabolite biosynthesis. Functionally, terpene cyclase; part of the gene cluster that mediates the biosynthesis of the indole diterpenes nodulisporic acids (NA). Nodulisporic acid A (NAA) and its chemically modified derivatives are of particular significance because of their highly potent insecticidal activity against blood-feeding arthropods and lack of observable adverse effects on mammals, in particular the tremogenicity associated with the paspaline-derived IDTs is not observed. The geranylgeranyl diphosphate (GGPP) synthase ggs1, localized outside of the cluster, is proposed to catalyze the first step in nodulisporic acid biosynthesis via conversion of farnesyl pyrophosphate and isopentyl pyrophosphate into geranylgeranyl pyrophosphate (GGPP). Condensation of indole-3-glycerol phosphate with GGPP by the prenyl transferase nodC then forms 3-geranylgeranylindole (3-GGI). Epoxidation by the FAD-dependent monooxygenase nodM leads to a single-epoxidized-GGI that is substrate of the terpene cyclase nodB for cyclization to yield emindole SB. The terminal methyl carbon, C28, of emindole SB is then oxidized by the cytochrome P450 monooxygenase nodW to produce nodulisporic acid F (NAF), the pentacyclic core of NAA. NAF is converted to nodulisporic acid E (NAE) via prenylation. This step is probably performed by one of the indole diterpene prenyltransferases nodD1 or nodD2. Several oxidation steps performed by the FAD-linked oxidoreductase nodO and one of the cytochrome P450 monooxygenase nodR, nodX or nodZ further convert NAE to nodulisporic acid D (NAD). NAD is substrate of cytochrome P450 monooxygenase nodJ to produce the precursor of nodulisporic acid C (NAC), converted to NAC by one of the indole diterpene prenyltransferases nodD1 or nodD2. The FAD-dependent monooxygenase nodY2 then oxidizes NAC to nodulisporic acid B (NAB). Finally NAB is converted to NAA by one of the cytochrome P450 monooxygenases nodR, nodX or nodZ. The chain is Terpene cyclase nodB from Hypoxylon pulicicidum.